An 856-amino-acid polypeptide reads, in one-letter code: DNA mismatch repair protein MutS (856 aa).

607 to 614 serves as a coordination point for ATP; that stretch reads GPNMAGKS.

Belongs to the DNA mismatch repair MutS family.

Functionally, this protein is involved in the repair of mismatches in DNA. It is possible that it carries out the mismatch recognition step. This protein has a weak ATPase activity. The sequence is that of DNA mismatch repair protein MutS from Cytophaga hutchinsonii (strain ATCC 33406 / DSM 1761 / CIP 103989 / NBRC 15051 / NCIMB 9469 / D465).